The sequence spans 355 residues: Probable sugar phosphate/phosphate translocator At3g10290 (355 aa).

Residues 19 to 51 (QKKQPNLSISSTTKMNKKNPDQKSDMSSSSSSP) form a disordered region. Positions 22–32 (QPNLSISSTTK) are enriched in polar residues. 10 helical membrane-spanning segments follow: residues 55–75 (TLFI…VLLL), 89–109 (IFLT…SIVF), 124–144 (FLKV…GNIS), 150–170 (VSFN…FAYI), 177–197 (AWVT…ASGG), 198–218 (EPGF…ARAF), 239–259 (LMLY…IFME), 277–297 (YILL…NFLV), 305–325 (TLQV…ILLF), and 328–348 (PVTV…VAYG).

Belongs to the TPT transporter family. TPT (TC 2.A.7.9) subfamily.

The protein localises to the membrane. This is Probable sugar phosphate/phosphate translocator At3g10290 from Arabidopsis thaliana (Mouse-ear cress).